We begin with the raw amino-acid sequence, 321 residues long: Homoserine kinase (321 aa).

The protein belongs to the pseudomonas-type ThrB family.

The enzyme catalyses L-homoserine + ATP = O-phospho-L-homoserine + ADP + H(+). It functions in the pathway amino-acid biosynthesis; L-threonine biosynthesis; L-threonine from L-aspartate: step 4/5. In Azorhizobium caulinodans (strain ATCC 43989 / DSM 5975 / JCM 20966 / LMG 6465 / NBRC 14845 / NCIMB 13405 / ORS 571), this protein is Homoserine kinase.